Reading from the N-terminus, the 153-residue chain is LOB domain-containing protein 26 (153 aa).

The LOB domain maps to 4-105; the sequence is NPCEVCRFQN…EEVSKTKKLL (102 aa). The disordered stretch occupies residues 126 to 153; that stretch reads KSKPSVLRKRKRKTKSSDESAIRVVEDS. Residues 140–153 are compositionally biased toward basic and acidic residues; it reads KSSDESAIRVVEDS.

Belongs to the LOB domain-containing protein family.

The sequence is that of LOB domain-containing protein 26 (LBD26) from Arabidopsis thaliana (Mouse-ear cress).